A 375-amino-acid chain; its full sequence is CCN family member 1 (375 aa).

Positions 1–22 (MGSAGARPALAAALLCLARLAL) are cleaved as a signal peptide. The 72-residue stretch at 23-94 (GSPCPAVCQC…AATNGICRAQ (72 aa)) folds into the IGFBP N-terminal domain. 6 cysteine pairs are disulfide-bonded: C26–C50, C30–C52, C32–C53, C39–C56, C64–C78, and C70–C91. The 67-residue stretch at 98–164 (RPCEYNSKIY…GQCCEEWVCD (67 aa)) folds into the VWFC domain. A TSP type-1 domain is found at 223 to 268 (KCIVQTTSWSQCSKTCGTGISTRVTNDNPDCKLIKETRICEVRPCG). The heparin-binding stretch occupies residues 274–310 (SLKKGKKCTKTKKSPSPVRFTYAGCSSVKKYRPKYCG). 5 disulfide bridges follow: C281-C318, C298-C332, C309-C348, C312-C350, and C317-C354. The region spanning 281–355 (CTKTKKSPSP…QSCRCNYNCP (75 aa)) is the CTCK domain.

This sequence belongs to the CCN family.

Its subcellular location is the secreted. Probable secreted regulatory protein. This is CCN family member 1 (CCN1) from Gallus gallus (Chicken).